A 562-amino-acid chain; its full sequence is T-complex protein 1 subunit epsilon (562 aa).

It belongs to the TCP-1 chaperonin family. In terms of assembly, heterooligomeric complex of about 850 to 900 kDa that forms two stacked rings, 12 to 16 nm in diameter.

The protein resides in the cytoplasm. Functionally, molecular chaperone; assists the folding of proteins upon ATP hydrolysis. Known to play a role, in vitro, in the folding of actin and tubulin. In yeast may play a role in mitotic spindle formation. The chain is T-complex protein 1 subunit epsilon (CCT5) from Saccharomyces cerevisiae (strain ATCC 204508 / S288c) (Baker's yeast).